The primary structure comprises 425 residues: Enolase (425 aa).

Q162 serves as a coordination point for (2R)-2-phosphoglycerate. The active-site Proton donor is E204. D241, E288, and D315 together coordinate Mg(2+). K340, R369, S370, and K391 together coordinate (2R)-2-phosphoglycerate. The Proton acceptor role is filled by K340.

The protein belongs to the enolase family. Mg(2+) serves as cofactor.

It is found in the cytoplasm. The protein resides in the secreted. It localises to the cell surface. The catalysed reaction is (2R)-2-phosphoglycerate = phosphoenolpyruvate + H2O. It functions in the pathway carbohydrate degradation; glycolysis; pyruvate from D-glyceraldehyde 3-phosphate: step 4/5. Its function is as follows. Catalyzes the reversible conversion of 2-phosphoglycerate (2-PG) into phosphoenolpyruvate (PEP). It is essential for the degradation of carbohydrates via glycolysis. This Porphyromonas gingivalis (strain ATCC 33277 / DSM 20709 / CIP 103683 / JCM 12257 / NCTC 11834 / 2561) protein is Enolase.